The chain runs to 243 residues: Probable transcriptional regulatory protein LSEI_1022 (243 aa).

Residues 1–23 are disordered; sequence MSGHSKWHNIQGRKNAQDSKRGK.

This sequence belongs to the TACO1 family.

The protein localises to the cytoplasm. This chain is Probable transcriptional regulatory protein LSEI_1022, found in Lacticaseibacillus paracasei (strain ATCC 334 / BCRC 17002 / CCUG 31169 / CIP 107868 / KCTC 3260 / NRRL B-441) (Lactobacillus paracasei).